The sequence spans 261 residues: Glucose 1-dehydrogenase 4 (261 aa).

Residue 11-35 participates in NAD(+) binding; the sequence is VITGGSTGLGRAMAVRFGQEEAKVV. Ser-145 is a substrate binding site. The active-site Proton acceptor is Tyr-158.

This sequence belongs to the short-chain dehydrogenases/reductases (SDR) family. As to quaternary structure, homotetramer.

The catalysed reaction is D-glucose + NAD(+) = D-glucono-1,5-lactone + NADH + H(+). The enzyme catalyses D-glucose + NADP(+) = D-glucono-1,5-lactone + NADPH + H(+). This Priestia megaterium (Bacillus megaterium) protein is Glucose 1-dehydrogenase 4 (gdhIV).